Reading from the N-terminus, the 159-residue chain is Large ribosomal subunit protein uL13 (159 aa).

This sequence belongs to the universal ribosomal protein uL13 family. As to quaternary structure, part of the 50S ribosomal subunit.

Its function is as follows. This protein is one of the early assembly proteins of the 50S ribosomal subunit, although it is not seen to bind rRNA by itself. It is important during the early stages of 50S assembly. This chain is Large ribosomal subunit protein uL13, found in Methanopyrus kandleri (strain AV19 / DSM 6324 / JCM 9639 / NBRC 100938).